We begin with the raw amino-acid sequence, 167 residues long: Inclusion membrane protein G (167 aa).

2 helical membrane-spanning segments follow: residues 33 to 57 (VVLA…AVLF) and 63 to 88 (VLPY…LRSL). The segment at 94 to 167 (SCKKRSPEEI…DNSRSRSRSF (74 aa)) is sufficient for interaction with human 14-3-3 beta protein. A disordered region spans residues 97–167 (KRSPEEIEGA…DNSRSRSRSF (71 aa)). Positions 122–135 (ESASPQASPTSSTL) are enriched in low complexity. The short motif at 161-166 (RSRSRS) is the Phosphorylation-dependent binding motif element. Position 166 is a phosphoserine (serine 166).

In terms of assembly, in infected HeLa cells colocalizes with host 14-3-3 protein (YWHAB); phosphorylation of Ser-166 is probably required. Interacts with Pkn1. In terms of processing, phosphorylated, possibly at more than one position, in infected HeLa cells. Phosphorylated by chlamydial kinase Pnk1.

The protein resides in the secreted. Its subcellular location is the host vacuole. It localises to the host pathogen-containing vacuole. It is found in the host pathogen-containing vacuole membrane. Inclusion membrane protein probably involved in early modification events of the chlamydial inclusion. This chain is Inclusion membrane protein G, found in Chlamydia trachomatis serovar L2 (strain ATCC VR-902B / DSM 19102 / 434/Bu).